The following is a 347-amino-acid chain: Melanoma-associated antigen B1 (347 aa).

Over residues 1-17 (MPRGQKSKLRAREKRRK) the composition is skewed to basic residues. The segment at 1-104 (MPRGQKSKLR…QATTSTESSV (104 aa)) is disordered. Composition is skewed to polar residues over residues 39–53 (PSSS…TSSP) and 89–102 (ENAS…STES). Positions 108–307 (VAWEAGMLMH…RDFPSHYEEA (200 aa)) constitute an MAGE domain. Positions 315-347 (AQVRSSVRARRRTTATTFRARSRAPFSRSSHPM) are disordered. The span at 328–347 (TATTFRARSRAPFSRSSHPM) shows a compositional bias: low complexity.

In terms of tissue distribution, expressed only in testis.

This Homo sapiens (Human) protein is Melanoma-associated antigen B1 (MAGEB1).